The sequence spans 182 residues: ADP-ribosylation factor 1 (182 aa).

Gly-2 is lipidated: N-myristoyl glycine. GTP is bound by residues 24 to 31, 67 to 71, and 126 to 129; these read GLDAAGKT, DVGGQ, and NKQD.

Belongs to the small GTPase superfamily. Arf family.

It is found in the golgi apparatus. It catalyses the reaction GTP + H2O = GDP + phosphate + H(+). GTP-binding protein involved in protein trafficking; may modulate vesicle budding and uncoating within the Golgi apparatus. This is ADP-ribosylation factor 1 (arfA) from Dictyostelium discoideum (Social amoeba).